A 259-amino-acid polypeptide reads, in one-letter code: UBX domain-containing protein 2A (259 aa).

Positions 1–151 are required for interaction with CHRNA3; it reads MKDVDNLKSI…SATPKIVSKA (151 aa). Positions 1-164 are required for inhibition of CHRNA3 ubiquitination and translocation of CHRNA3 to the plasma membrane resulting in an increase in acetylcholine-gated nicotinic acetylcholine receptor currents; sequence MKDVDNLKSI…EVENKNNLSA (164 aa). Residues 60-124 form the SEP domain; sequence QVDVNIKLWK…VEDKKNEICL (65 aa). A required for interaction with VCP region spans residues 167-259; sequence LNNLEPITNI…TASFRELSEH (93 aa). Residues 169–246 form the UBX domain; sequence NLEPITNIQI…DLQNAVIIQR (78 aa).

In terms of assembly, part of a complex composed of STUB1/CHIP, VCP/p97, CHRNA3, and UBXN2A that modulates the ubiquitination and endoplasmic reticulum-associated degradation (ERAD) of CHRNA3. Within the complex UBXN2A acts as a scaffold protein required for the interaction of CHRNA3 with VCP/p97, this interaction also inhibits CHRNA3 ubiquitination by STUB1/CHIP and subsequently ERAD. Interacts (via SEP domain) with CHRNA3 and interacts (via UBX domain) with VCP/P97; these interactions are required for the interaction of CHRNA3 with the STUB1-VCP-UBXN2A complex. Interacts with HSPA9/MOT-2 (via SBD domain); the interaction inhibits HSPA9/MOT-2 interaction with and degradation of p53, thereby promotes p53 translocation to the nucleus. Interacts with RICTOR. Ubiquitinated. As to expression, expressed in the colon (at protein level).

It localises to the golgi apparatus. Its subcellular location is the endoplasmic reticulum. It is found in the perikaryon. The protein localises to the cell projection. The protein resides in the dendrite. It localises to the nucleus. Its subcellular location is the cytoplasm. Acts to repress the ubiquitination and subsequent endoplasmic reticulum-associated degradation of CHRNA3 by the STUB1-VCP-UBXN2A complex in cortical neurons. Also acts to promote the translocation of CHRNA3 to the plasma membrane and subsequently increases plasma membrane acetylcholine-gated ion-channel activation. Plays a role in the inhibition of STUB1-mediated TP53 degradation, via its interaction with HSPA9 which acts to inhibit TP53 binding to HSPA9. Positively mediates the ubiquitination and proteosomal degradation of RICTOR, may thereby act as a negative regulator of the mTORC2 pathway. The sequence is that of UBX domain-containing protein 2A from Homo sapiens (Human).